The following is a 160-amino-acid chain: Peripheral myelin protein 22 (160 aa).

Met1 is a topological domain (cytoplasmic). The helical transmembrane segment at 2-31 (LLLLLSIIVLHVAVLVLLFVSTIVSQWIVG) threads the bilayer. The Extracellular portion of the chain corresponds to 32–64 (NGHATDLWQNCSTSSSGNVHHCFSSSPNEWLQS). An N-linked (GlcNAc...) asparagine glycan is attached at Asn41. The chain crosses the membrane as a helical span at residues 65-91 (VQATMILSIIFSILSLFLFFCQLFTLT). Topologically, residues 92 to 95 (KGGR) are cytoplasmic. Residues 96–119 (FYITGIFQILAGLCVMSAAAIYTV) traverse the membrane as a helical segment. Residues 120-133 (RHPEWHLNSDYSYG) are Extracellular-facing. A helical transmembrane segment spans residues 134–156 (FAYILAWVAFPLALLSGVIYVIL). Residues 157–160 (RKRE) are Cytoplasmic-facing.

The protein belongs to the PMP-22/EMP/MP20 family. In terms of processing, ubiquitinated by the DCX(DCAF13) E3 ubiquitin ligase complex, leading to its degradation.

Its subcellular location is the cell membrane. Functionally, might be involved in growth regulation, and in myelinization in the peripheral nervous system. The sequence is that of Peripheral myelin protein 22 (PMP22) from Homo sapiens (Human).